The sequence spans 495 residues: Cobyric acid synthase (495 aa).

The region spanning 252–439 is the GATase cobBQ-type domain; sequence RIRIAAPMLS…VHGLFAQDAF (188 aa). The active-site Nucleophile is the cysteine 334. The active site involves histidine 431.

The protein belongs to the CobB/CobQ family. CobQ subfamily.

It participates in cofactor biosynthesis; adenosylcobalamin biosynthesis. In terms of biological role, catalyzes amidations at positions B, D, E, and G on adenosylcobyrinic A,C-diamide. NH(2) groups are provided by glutamine, and one molecule of ATP is hydrogenolyzed for each amidation. This Hyphomonas neptunium (strain ATCC 15444) protein is Cobyric acid synthase.